The following is a 576-amino-acid chain: Laccase-1 (576 aa).

The signal sequence occupies residues 1–19 (MARTTFLVSVSLFVSAVLA). Plastocyanin-like domains are found at residues 21-145 (TVEY…LVIY) and 157-304 (VDDE…LVYE). Asn41 carries an N-linked (GlcNAc...) asparagine glycan. Cu cation contacts are provided by His82, His84, His127, and His129. A disulfide bridge links Cys103 with Cys562. N-linked (GlcNAc...) asparagine glycosylation is found at Asn182, Asn228, Asn294, and Asn368. Residues 376-576 (DESKLVPLEY…NWLKSNPGQL (201 aa)) form the Plastocyanin-like 3 domain. The Cu cation site is built by His471, His474, His476, His523, Cys524, His525, and His529.

Belongs to the multicopper oxidase family. As to quaternary structure, homodimer. The cofactor is Cu cation. In terms of tissue distribution, in mycelia, at a lower level than LCC4.

It localises to the secreted. The enzyme catalyses 4 hydroquinone + O2 = 4 benzosemiquinone + 2 H2O. Lignin degradation and detoxification of lignin-derived products. The chain is Laccase-1 (LCC1) from Thanatephorus cucumeris (Black scurf of potato).